The following is a 367-amino-acid chain: GMP synthase [glutamine-hydrolyzing] subunit B (367 aa).

The region spanning 2–190 (FDPASFVEEI…LKLPKEISER (189 aa)) is the GMPS ATP-PPase domain. 29-35 (SGGVDST) lines the ATP pocket.

As to quaternary structure, heterodimer composed of a glutamine amidotransferase subunit (A) and a GMP-binding subunit (B).

It carries out the reaction XMP + L-glutamine + ATP + H2O = GMP + L-glutamate + AMP + diphosphate + 2 H(+). It participates in purine metabolism; GMP biosynthesis; GMP from XMP (L-Gln route): step 1/1. Its function is as follows. Catalyzes the synthesis of GMP from XMP. The polypeptide is GMP synthase [glutamine-hydrolyzing] subunit B (guaAB) (Saccharolobus solfataricus (strain ATCC 35092 / DSM 1617 / JCM 11322 / P2) (Sulfolobus solfataricus)).